Reading from the N-terminus, the 485-residue chain is Adenosylhomocysteinase 2 (485 aa).

The substrate site is built by Thr-64, Asp-139, and Glu-205. Residue 206-208 (TTT) coordinates NAD(+). Substrate is bound by residues Lys-235 and Asp-239. NAD(+)-binding positions include Asn-240, 269–274 (GYGDVG), Glu-292, Asn-327, 348–350 (IGH), and Asn-397.

This sequence belongs to the adenosylhomocysteinase family. The cofactor is NAD(+).

The enzyme catalyses S-adenosyl-L-homocysteine + H2O = L-homocysteine + adenosine. The protein operates within amino-acid biosynthesis; L-homocysteine biosynthesis; L-homocysteine from S-adenosyl-L-homocysteine: step 1/1. Functionally, adenosylhomocysteine is a competitive inhibitor of S-adenosyl-L-methionine-dependent methyl transferase reactions; therefore adenosylhomocysteinase may play a key role in the control of methylations via regulation of the intracellular concentration of adenosylhomocysteine. The sequence is that of Adenosylhomocysteinase 2 (SAHH2) from Arabidopsis thaliana (Mouse-ear cress).